Here is an 837-residue protein sequence, read N- to C-terminus: Outer membrane usher protein HifC (837 aa).

Residues 1–26 (MKTKIFPLNKIAFACSLLLANPLAWA) form the signal peptide. Cys813 and Cys833 are joined by a disulfide.

Belongs to the fimbrial export usher family.

The protein resides in the cell outer membrane. Functionally, essential for piliation. The chain is Outer membrane usher protein HifC (hifC) from Haemophilus influenzae.